Consider the following 67-residue polypeptide: Light-harvesting protein B-870 alpha chain (67 aa).

Residue Met1 is modified to N-formylmethionine; in strain DSM 149 and DSM 151. The Cytoplasmic segment spans residues 1-12 (MWRIWRLFDPMR). A helical transmembrane segment spans residues 13 to 33 (AMVAQAVFLLGLAVLIHLMLL). Position 29 (His29) interacts with a bacteriochlorophyll. The Periplasmic segment spans residues 34 to 67 (GTNKYNWLDGAKKAPAATAVAPVPAEVTSLAQAK).

The protein belongs to the antenna complex alpha subunit family. As to quaternary structure, an alpha/beta heterodimer. The core complex is formed by different alpha and beta chains, binding bacteriochlorophyll molecules, and arranged most probably in tetrameric structures disposed around the reaction center. The non-pigmented gamma chains may constitute additional components. The N-terminus is blocked.

The protein localises to the cell inner membrane. Its function is as follows. Antenna complexes are light-harvesting systems, which transfer the excitation energy to the reaction centers. The sequence is that of Light-harvesting protein B-870 alpha chain (pufA) from Rubrivivax gelatinosus (Rhodocyclus gelatinosus).